We begin with the raw amino-acid sequence, 465 residues long: ATP synthase subunit beta (465 aa).

152–159 (GGAGVGKT) provides a ligand contact to ATP.

It belongs to the ATPase alpha/beta chains family. F-type ATPases have 2 components, CF(1) - the catalytic core - and CF(0) - the membrane proton channel. CF(1) has five subunits: alpha(3), beta(3), gamma(1), delta(1), epsilon(1). CF(0) has three main subunits: a(1), b(2) and c(9-12). The alpha and beta chains form an alternating ring which encloses part of the gamma chain. CF(1) is attached to CF(0) by a central stalk formed by the gamma and epsilon chains, while a peripheral stalk is formed by the delta and b chains.

The protein resides in the cell inner membrane. The enzyme catalyses ATP + H2O + 4 H(+)(in) = ADP + phosphate + 5 H(+)(out). Functionally, produces ATP from ADP in the presence of a proton gradient across the membrane. The catalytic sites are hosted primarily by the beta subunits. The sequence is that of ATP synthase subunit beta from Campylobacter concisus (strain 13826).